Consider the following 93-residue polypeptide: UPF0473 protein BH1270 (93 aa).

The protein belongs to the UPF0473 family.

In Halalkalibacterium halodurans (strain ATCC BAA-125 / DSM 18197 / FERM 7344 / JCM 9153 / C-125) (Bacillus halodurans), this protein is UPF0473 protein BH1270.